The primary structure comprises 136 residues: Large ribosomal subunit protein bL19 (136 aa).

Belongs to the bacterial ribosomal protein bL19 family.

Functionally, this protein is located at the 30S-50S ribosomal subunit interface and may play a role in the structure and function of the aminoacyl-tRNA binding site. The protein is Large ribosomal subunit protein bL19 of Xylella fastidiosa (strain 9a5c).